We begin with the raw amino-acid sequence, 104 residues long: Large ribosomal subunit protein eL30 (104 aa).

This sequence belongs to the eukaryotic ribosomal protein eL30 family.

This chain is Large ribosomal subunit protein eL30 (RPL30), found in Tetrahymena thermophila (strain SB210).